The following is a 291-amino-acid chain: 4-hydroxy-tetrahydrodipicolinate synthase (291 aa).

Thr47 contributes to the pyruvate binding site. Residue Tyr134 is the Proton donor/acceptor of the active site. Catalysis depends on Lys162, which acts as the Schiff-base intermediate with substrate. A pyruvate-binding site is contributed by Ile205.

This sequence belongs to the DapA family. As to quaternary structure, homotetramer; dimer of dimers.

The protein localises to the cytoplasm. It catalyses the reaction L-aspartate 4-semialdehyde + pyruvate = (2S,4S)-4-hydroxy-2,3,4,5-tetrahydrodipicolinate + H2O + H(+). It participates in amino-acid biosynthesis; L-lysine biosynthesis via DAP pathway; (S)-tetrahydrodipicolinate from L-aspartate: step 3/4. Catalyzes the condensation of (S)-aspartate-beta-semialdehyde [(S)-ASA] and pyruvate to 4-hydroxy-tetrahydrodipicolinate (HTPA). The chain is 4-hydroxy-tetrahydrodipicolinate synthase from Methanospirillum hungatei JF-1 (strain ATCC 27890 / DSM 864 / NBRC 100397 / JF-1).